The chain runs to 662 residues: MSFSDSGSSSYGGEYKNFRQITRERLLCEMLRPERNGSSKLTWKVLVMDKFTVKIMSSACKMSEITQEGISLVEVITKHRQPMTAMEVIYFIQPTEENVTAFLSDMTGKSPLYKKAFVFFSSPVSRSLVNLIKKDMRAMKRIGGLKEMNLEYISMDIQGFVTNNENALEELFCDDENHQRADACLNVVAKRIATVLASLKEYPFVRYRGAKALDATTMTTYRELIPTKLAASVWNCLARYKQTIEDFPQTETCELLILDRSIDQIAPLIHEWTYDAMCHDLLNMEGNKYTHEVPSKTGDKPEKKEVLLDEEDSIWVELRDAHIADASERLHEKMTNFVSKNKAAQLKHSSKDFGDLSSKDLQKMVHALPQYSEQIDKLSLHVEIARTINRTIMEQGLRDLGQLEQDLVFGDAGRKDVIKFLSTNHIISHESKLRLIMIVAAIYPKKFEGEKGRKMMELAKLSGDDVVAVNNMRLLGPVHTECKKSTTGSFPLKFDVLKTKRAARRDRVGETQTWQLSRFYPIVEELVEKLSKGHLPKQDYPCMNEPKPTFYSGSLSPSASPVLPHSRRTPTWARRHLSDDGYFSDSVLGRASSGFKRKGQRIFVFIVGGATRSELRVCHKLTEKLDREVILGSSSFLDPLTFLTKMKQLNEEEEISLDDIVI.

It belongs to the STXBP/unc-18/SEC1 family.

Involved in the vesicle trafficking. Binds syntaxins. This chain is Protein transport Sec1b (SEC1B), found in Arabidopsis thaliana (Mouse-ear cress).